The following is a 282-amino-acid chain: Purine nucleoside phosphorylase (282 aa).

Phosphate contacts are provided by residues serine 46, histidine 78, and 103–105; that span reads RTH. The active site involves glutamate 204. Residue glutamate 204 coordinates a purine D-ribonucleoside. Serine 223 contributes to the phosphate binding site. Asparagine 246 lines the a purine D-ribonucleoside pocket.

This sequence belongs to the PNP/MTAP phosphorylase family. In terms of assembly, homotrimer.

The catalysed reaction is a purine 2'-deoxy-D-ribonucleoside + phosphate = a purine nucleobase + 2-deoxy-alpha-D-ribose 1-phosphate. Its pathway is purine metabolism; purine nucleoside salvage. Its function is as follows. The purine nucleoside phosphorylases catalyze the phosphorolytic breakdown of the N-glycosidic bond in the beta-(deoxy)ribonucleoside molecules, with the formation of the corresponding free purine bases and pentose-1-phosphate. Cleaves guanosine, inosine, 2'-deoxyguanosine and 2'-deoxyinosine. The sequence is that of Purine nucleoside phosphorylase (punA) from Cellulomonas sp.